The primary structure comprises 351 residues: Phosphate acyltransferase (351 aa).

This sequence belongs to the PlsX family. Homodimer. Probably interacts with PlsY.

It localises to the cytoplasm. The enzyme catalyses a fatty acyl-[ACP] + phosphate = an acyl phosphate + holo-[ACP]. The protein operates within lipid metabolism; phospholipid metabolism. Functionally, catalyzes the reversible formation of acyl-phosphate (acyl-PO(4)) from acyl-[acyl-carrier-protein] (acyl-ACP). This enzyme utilizes acyl-ACP as fatty acyl donor, but not acyl-CoA. This is Phosphate acyltransferase from Paramagnetospirillum magneticum (strain ATCC 700264 / AMB-1) (Magnetospirillum magneticum).